Reading from the N-terminus, the 1433-residue chain is Probable ATP-dependent RNA helicase spindle-E (1433 aa).

Positions 126 to 294 constitute a Helicase ATP-binding domain; the sequence is INAINENPVV…FANERSAPPV (169 aa). 139–146 serves as a coordination point for ATP; it reads GETGCGKT. A DEAH box motif is present at residues 240 to 243; that stretch reads DEVH. The Helicase C-terminal domain maps to 355–526; the sequence is TGKSYNQSLR…NCVLKAKELK (172 aa). Positions 935–998 constitute a Tudor domain; that stretch reads AGAITKGLML…RLMSQDLLRH (64 aa).

The protein belongs to the DEAD box helicase family. DEAH subfamily.

The protein localises to the cytoplasm. It catalyses the reaction ATP + H2O = ADP + phosphate + H(+). Its function is as follows. Probable ATP-binding RNA helicase which plays a central role during spermatogenesis and oogenesis by repressing transposable elements and preventing their mobilization, which is essential for the germline integrity. Acts via the piRNA metabolic process, which mediates the repression of transposable elements during meiosis by forming complexes composed of piRNAs and Piwi and govern the methylation and subsequent repression of transposons. Involved in the repression of LTR retrotransposon copia. Also involved in telomere regulation by repressing specialized telomeric retroelements HeT-A, TAHRE, and TART; Drosophila telomeres being maintained by transposition of specialized telomeric retroelements. Involved in telomeric trans-silencing, a repression mechanism by which a transposon or a transgene inserted in subtelomeric heterochromatin has the capacity to repress in trans in the female germline, a homologous transposon, or transgene located in euchromatin. Involved in the repression of testis-expressed Stellate genes by the homologous Su(Ste) repeats. Required for anteroposterior and dorsoventral axis formation during oogenesis. In Drosophila pseudoobscura pseudoobscura (Fruit fly), this protein is Probable ATP-dependent RNA helicase spindle-E (spn-E).